The following is a 581-amino-acid chain: MGIRLQSSDSMNNQHQTQQNKYFNVSNQASTRSLWSQQQQQQLLDTKGSASTSKSPMLMANNNVFSIGPYRQRKDAGRVSVLEKYEIIGYIAAGTYGKVYKAKAKETQEEQENSIHTHNQTLGSVSVAGIDGGMASREVENGGDDPLRLDGHGGIAVAPAAGGGLSSAAAHRARSNGAVKALPKKSAFTPFYAIKKFKTEREGVEQLHYTGISQSACREMSLCRELDNKHLTKLVEIFLERKSIYMVSEFAEHDLLQIIHFHSHPEKRLIAPRMLKSIMWQILDGVSYLHQNWILHRDLKPANIMVTVDGCVKIGDLGLARKFYNLVQTLYTGDKVVVTIWYRAPELLLGARHYSPAIDLWAVGCIFAELIGLRPIFKGEEAKMDSKKSVPFQGNQLQRILEVLGTPTHHTWPNIHKYPEYEQLSKFSKYRDNLSVWYHSSGGRDKAALSLLYSLLKYDPITRIDAIDALEHEYFTNNDPPVSSDVFEGLSYKYPPRRIHTSDNDIMNVGANKNKSGFNHHPPQQQTVNNNGVTNSSIGGLGVNRRILAAAAAAAAAVQVNGTNIVSGSSSSNGPIRKKKR.

Residues 34-57 (LWSQQQQQQLLDTKGSASTSKSPM) are disordered. The span at 48–57 (GSASTSKSPM) shows a compositional bias: polar residues. The Protein kinase domain occupies 85–475 (YEIIGYIAAG…AIDALEHEYF (391 aa)). ATP contacts are provided by residues 91–99 (IAAGTYGKV) and lysine 195. Aspartate 298 serves as the catalytic Proton acceptor.

This sequence belongs to the protein kinase superfamily. CMGC Ser/Thr protein kinase family. CDC2/CDKX subfamily. As to quaternary structure, component of the SRB8-11 complex, a regulatory module of the Mediator complex. The cofactor is Mg(2+).

It is found in the nucleus. It carries out the reaction L-seryl-[protein] + ATP = O-phospho-L-seryl-[protein] + ADP + H(+). The catalysed reaction is L-threonyl-[protein] + ATP = O-phospho-L-threonyl-[protein] + ADP + H(+). The enzyme catalyses [DNA-directed RNA polymerase] + ATP = phospho-[DNA-directed RNA polymerase] + ADP + H(+). In terms of biological role, component of the SRB8-11 complex. The SRB8-11 complex is a regulatory module of the Mediator complex which is itself involved in regulation of basal and activated RNA polymerase II-dependent transcription. The SRB8-11 complex may be involved in the transcriptional repression of a subset of genes regulated by Mediator. It may inhibit the association of the Mediator complex with RNA polymerase II to form the holoenzyme complex. The SRB8-11 complex phosphorylates the C-terminal domain (CTD) of the largest subunit of RNA polymerase II. The sequence is that of Serine/threonine-protein kinase SSN3 (SSN3) from Eremothecium gossypii (strain ATCC 10895 / CBS 109.51 / FGSC 9923 / NRRL Y-1056) (Yeast).